A 511-amino-acid polypeptide reads, in one-letter code: Vesicular acetylcholine transporter (511 aa).

Over M1–K36 the chain is Cytoplasmic. Residues I37 to V57 form a helical membrane-spanning segment. Topologically, residues P58–G108 are lumenal, vesicle. N80, N83, and N88 each carry an N-linked (GlcNAc...) asparagine glycan. Residues V109–I129 form a helical membrane-spanning segment. Residues D130 to D135 are Cytoplasmic-facing. The helical transmembrane segment at I136–E156 threads the bilayer. At S157–R165 the chain is on the lumenal, vesicle side. A helical transmembrane segment spans residues S166–K186. The Cytoplasmic segment spans residues Y187–L197. Residues G198–L218 form a helical membrane-spanning segment. Topologically, residues Y219–W225 are lumenal, vesicle. Residues V226 to V246 traverse the membrane as a helical segment. Topologically, residues T247 to M267 are cytoplasmic. The chain crosses the membrane as a helical span at residues I268–F288. Residues L289–W306 lie on the Lumenal, vesicle side of the membrane. N302 carries an N-linked (GlcNAc...) asparagine glycan. The chain crosses the membrane as a helical span at residues Q307 to V327. Residues K328–Q337 lie on the Cytoplasmic side of the membrane. A helical transmembrane segment spans residues W338–C358. Residues R359–E363 are Lumenal, vesicle-facing. A helical membrane pass occupies residues L364–P384. Residues T385–S400 lie on the Cytoplasmic side of the membrane. A helical transmembrane segment spans residues V401–G421. Residues Q422–G428 are Lumenal, vesicle-facing. A helical membrane pass occupies residues F429 to F449. Topologically, residues L450–E511 are cytoplasmic. Residues A486–E511 are disordered.

It belongs to the major facilitator superfamily. Vesicular transporter family. High expression in the electric lobe of the brain.

It localises to the membrane. Its function is as follows. Involved in acetylcholine transport into synaptic vesicles. The polypeptide is Vesicular acetylcholine transporter (Torpedo torpedo (Common torpedo)).